Consider the following 209-residue polypeptide: Orotate phosphoribosyltransferase (209 aa).

5-phospho-alpha-D-ribose 1-diphosphate contacts are provided by residues Arg96, Lys100, His102, and 122 to 130 (EDLISTGGS). Ser126 serves as a coordination point for orotate.

This sequence belongs to the purine/pyrimidine phosphoribosyltransferase family. PyrE subfamily. Homodimer. Mg(2+) is required as a cofactor.

The catalysed reaction is orotidine 5'-phosphate + diphosphate = orotate + 5-phospho-alpha-D-ribose 1-diphosphate. It functions in the pathway pyrimidine metabolism; UMP biosynthesis via de novo pathway; UMP from orotate: step 1/2. Functionally, catalyzes the transfer of a ribosyl phosphate group from 5-phosphoribose 1-diphosphate to orotate, leading to the formation of orotidine monophosphate (OMP). In Streptococcus pyogenes serotype M5 (strain Manfredo), this protein is Orotate phosphoribosyltransferase.